A 704-amino-acid polypeptide reads, in one-letter code: Low calcium response locus protein D (704 aa).

7 helical membrane passes run 18 to 35, 42 to 61, 108 to 132, 200 to 220, 235 to 259, 278 to 297, and 304 to 320; these read IMLAVLLLAVVFMMVLPL, ILIAVNMTISVVLLMIAIYI, FVVGGNLIVGIVIFLIITIVQFLVI, AIAGLIIIFVNILGGVTIGVT, ILTVGDGMVSQVPALLIAITAGIIV, VVAQPKAMLIGGVLLLLFGL, and VTFLILALLVGCGGYML.

It belongs to the FHIPEP (flagella/HR/invasion proteins export pore) family.

The protein resides in the cell inner membrane. In terms of biological role, could be involved in the secretion of the yop virulence proteins. The sequence is that of Low calcium response locus protein D (lcrD) from Yersinia pestis.